Here is a 250-residue protein sequence, read N- to C-terminus: 2,3-bisphosphoglycerate-dependent phosphoglycerate mutase (250 aa).

Substrate-binding positions include 10–17, 23–24, R62, 89–92, K100, 116–117, and 185–186; these read RHGESQWN, TG, ERHY, RR, and GN. H11 functions as the Tele-phosphohistidine intermediate in the catalytic mechanism. E89 (proton donor/acceptor) is an active-site residue.

It belongs to the phosphoglycerate mutase family. BPG-dependent PGAM subfamily. In terms of assembly, homodimer.

It catalyses the reaction (2R)-2-phosphoglycerate = (2R)-3-phosphoglycerate. Its pathway is carbohydrate degradation; glycolysis; pyruvate from D-glyceraldehyde 3-phosphate: step 3/5. Catalyzes the interconversion of 2-phosphoglycerate and 3-phosphoglycerate. The polypeptide is 2,3-bisphosphoglycerate-dependent phosphoglycerate mutase (Erwinia tasmaniensis (strain DSM 17950 / CFBP 7177 / CIP 109463 / NCPPB 4357 / Et1/99)).